Reading from the N-terminus, the 452-residue chain is Phosphoglucosamine mutase (452 aa).

Catalysis depends on Ser-98, which acts as the Phosphoserine intermediate. Mg(2+) is bound by residues Ser-98, Asp-239, Asp-241, and Asp-243. Ser-98 is subject to Phosphoserine.

This sequence belongs to the phosphohexose mutase family. Mg(2+) serves as cofactor. Activated by phosphorylation.

It catalyses the reaction alpha-D-glucosamine 1-phosphate = D-glucosamine 6-phosphate. In terms of biological role, catalyzes the conversion of glucosamine-6-phosphate to glucosamine-1-phosphate. In Anaplasma marginale (strain St. Maries), this protein is Phosphoglucosamine mutase.